A 294-amino-acid polypeptide reads, in one-letter code: Putative pyruvate, phosphate dikinase regulatory protein (294 aa).

Gly-156–Thr-163 is an ADP binding site.

It belongs to the pyruvate, phosphate/water dikinase regulatory protein family. PDRP subfamily.

The enzyme catalyses N(tele)-phospho-L-histidyl/L-threonyl-[pyruvate, phosphate dikinase] + ADP = N(tele)-phospho-L-histidyl/O-phospho-L-threonyl-[pyruvate, phosphate dikinase] + AMP + H(+). The catalysed reaction is N(tele)-phospho-L-histidyl/O-phospho-L-threonyl-[pyruvate, phosphate dikinase] + phosphate + H(+) = N(tele)-phospho-L-histidyl/L-threonyl-[pyruvate, phosphate dikinase] + diphosphate. Bifunctional serine/threonine kinase and phosphorylase involved in the regulation of the pyruvate, phosphate dikinase (PPDK) by catalyzing its phosphorylation/dephosphorylation. This Cutibacterium acnes (strain DSM 16379 / KPA171202) (Propionibacterium acnes) protein is Putative pyruvate, phosphate dikinase regulatory protein.